We begin with the raw amino-acid sequence, 259 residues long: Phosphatidylglycerol--prolipoprotein diacylglyceryl transferase (259 aa).

4 helical membrane-spanning segments follow: residues 12 to 32, 41 to 61, 80 to 100, and 109 to 129; these read LAIHWYALCILSGLVLAVYLA, ISSDAIFDFILIAFPLAIVGA, IIAIWNGGIAIYGGLITGALV, and VLNPIHFLDIAAPSVMVAQAI. R131 provides a ligand contact to a 1,2-diacyl-sn-glycero-3-phospho-(1'-sn-glycerol). Transmembrane regions (helical) follow at residues 167-187, 194-214, and 226-246; these read IPTFLYESLWNLLGFVIIMMW, LLDGEIFAFYLIWYGSGRLVI, and GIRISQYVSALLIIIGLIFVI.

This sequence belongs to the Lgt family.

It is found in the cell membrane. The catalysed reaction is L-cysteinyl-[prolipoprotein] + a 1,2-diacyl-sn-glycero-3-phospho-(1'-sn-glycerol) = an S-1,2-diacyl-sn-glyceryl-L-cysteinyl-[prolipoprotein] + sn-glycerol 1-phosphate + H(+). Its pathway is protein modification; lipoprotein biosynthesis (diacylglyceryl transfer). In terms of biological role, catalyzes the transfer of the diacylglyceryl group from phosphatidylglycerol to the sulfhydryl group of the N-terminal cysteine of a prolipoprotein, the first step in the formation of mature lipoproteins. The polypeptide is Phosphatidylglycerol--prolipoprotein diacylglyceryl transferase (Streptococcus pyogenes serotype M49 (strain NZ131)).